A 300-amino-acid polypeptide reads, in one-letter code: Diaminopimelate epimerase (300 aa).

Residues Asn15, Gln47, and Asn67 each contribute to the substrate site. The active-site Proton donor is Cys76. Residues 77–78 (GN), Asn163, Asn197, and 215–216 (ER) each bind substrate. Cys224 functions as the Proton acceptor in the catalytic mechanism. A substrate-binding site is contributed by 225–226 (GS). Residues 275 to 300 (SGTFDPATGEWSRDAQNDKPTDRGAA) are disordered. The segment covering 285–300 (WSRDAQNDKPTDRGAA) has biased composition (basic and acidic residues).

This sequence belongs to the diaminopimelate epimerase family. In terms of assembly, homodimer.

The protein localises to the cytoplasm. The enzyme catalyses (2S,6S)-2,6-diaminopimelate = meso-2,6-diaminopimelate. It participates in amino-acid biosynthesis; L-lysine biosynthesis via DAP pathway; DL-2,6-diaminopimelate from LL-2,6-diaminopimelate: step 1/1. Catalyzes the stereoinversion of LL-2,6-diaminopimelate (L,L-DAP) to meso-diaminopimelate (meso-DAP), a precursor of L-lysine and an essential component of the bacterial peptidoglycan. In Brucella anthropi (strain ATCC 49188 / DSM 6882 / CCUG 24695 / JCM 21032 / LMG 3331 / NBRC 15819 / NCTC 12168 / Alc 37) (Ochrobactrum anthropi), this protein is Diaminopimelate epimerase.